A 363-amino-acid polypeptide reads, in one-letter code: Cyanide hydratase (363 aa).

Residues 6-285 (YKAACVTSEP…DGLLFVDIDL (280 aa)) form the CN hydrolase domain. The Proton acceptor role is filled by E46. K128 is an active-site residue. The Nucleophile role is filled by C163.

The protein belongs to the carbon-nitrogen hydrolase superfamily. Nitrilase family. Oligomer of dimers, forming left-handed helical fibers.

It carries out the reaction formamide = hydrogen cyanide + H2O. Functionally, catalyzes the hydration of cyanide to formamide. Degradation of cyanide may be important for plant pathogenic fungi in infection of cyanogenic plants. The protein is Cyanide hydratase (CyhAB) of Alternaria brassicicola (Dark leaf spot agent).